The chain runs to 132 residues: Small ribosomal subunit protein uS8 (132 aa).

Belongs to the universal ribosomal protein uS8 family. Part of the 30S ribosomal subunit. Contacts proteins S5 and S12.

Functionally, one of the primary rRNA binding proteins, it binds directly to 16S rRNA central domain where it helps coordinate assembly of the platform of the 30S subunit. This is Small ribosomal subunit protein uS8 from Clostridium tetani (strain Massachusetts / E88).